Reading from the N-terminus, the 133-residue chain is Ribosome-binding factor A (133 aa).

It belongs to the RbfA family. In terms of assembly, monomer. Binds 30S ribosomal subunits, but not 50S ribosomal subunits or 70S ribosomes.

The protein resides in the cytoplasm. Its function is as follows. One of several proteins that assist in the late maturation steps of the functional core of the 30S ribosomal subunit. Associates with free 30S ribosomal subunits (but not with 30S subunits that are part of 70S ribosomes or polysomes). Required for efficient processing of 16S rRNA. May interact with the 5'-terminal helix region of 16S rRNA. The polypeptide is Ribosome-binding factor A (Trichormus variabilis (strain ATCC 29413 / PCC 7937) (Anabaena variabilis)).